A 684-amino-acid chain; its full sequence is Threonine--tRNA ligase (684 aa).

A TGS domain is found at 1–66 (MTVPATDSWP…DTDAEVVPVA (66 aa)). The interval 261–567 (DHRKLGSELD…LTEHYAGAFP (307 aa)) is catalytic. 3 residues coordinate Zn(2+): C366, H417, and H544.

It belongs to the class-II aminoacyl-tRNA synthetase family. Homodimer. The cofactor is Zn(2+).

The protein localises to the cytoplasm. It carries out the reaction tRNA(Thr) + L-threonine + ATP = L-threonyl-tRNA(Thr) + AMP + diphosphate + H(+). In terms of biological role, catalyzes the attachment of threonine to tRNA(Thr) in a two-step reaction: L-threonine is first activated by ATP to form Thr-AMP and then transferred to the acceptor end of tRNA(Thr). Also edits incorrectly charged L-seryl-tRNA(Thr). This is Threonine--tRNA ligase from Mycobacterium avium (strain 104).